Consider the following 571-residue polypeptide: Isthmin-2 (571 aa).

An N-terminal signal peptide occupies residues Met-1–Gly-26. Disordered regions lie at residues Lys-30–Glu-60, Ala-116–Glu-141, and Glu-257–Glu-294. The span at Ala-116–Ala-131 shows a compositional bias: polar residues. Residue Asn-117 is glycosylated (N-linked (GlcNAc...) asparagine). The segment covering Glu-257 to Glu-268 has biased composition (basic and acidic residues). The span at Lys-269–Glu-294 shows a compositional bias: acidic residues. N-linked (GlcNAc...) asparagine glycosylation is present at Asn-300. In terms of domain architecture, TSP type-1 spans Glu-327–Pro-371. 3 cysteine pairs are disulfide-bonded: Cys-338–Cys-365, Cys-342–Cys-370, and Cys-353–Cys-357. N-linked (GlcNAc...) asparagine glycosylation occurs at Asn-392. The region spanning Met-396–Glu-559 is the AMOP domain.

It belongs to the isthmin family. In terms of tissue distribution, expressed at high levels in the placenta and at moderate levels in the pancreas, kidney, heart, liver, lung, brain and skeletal muscle.

The protein resides in the secreted. The chain is Isthmin-2 (ISM2) from Homo sapiens (Human).